The primary structure comprises 161 residues: MRKLTALFVASTLALGAANLAHAADTTTAAPADAKPMMHHKGKFGPHQDMMFKDLNLTDAQKQQIREIMKGQRDQMKRPPLEERRAMHDIIASDTFDKVKAEAQIAKMEEQRKANMLAHMETQNKIYNILTPEQKKQFNANFEKRLTERPAAKGKMPATAE.

An N-terminal signal peptide occupies residues 1 to 23 (MRKLTALFVASTLALGAANLAHA). Residues 140-161 (ANFEKRLTERPAAKGKMPATAE) form a disordered region. The segment covering 142–151 (FEKRLTERPA) has biased composition (basic and acidic residues).

It belongs to the CpxP/Spy family. Homodimer.

Its subcellular location is the periplasm. In terms of biological role, an ATP-independent periplasmic chaperone, decreases protein aggregation and helps protein refolding. Binds substrate over a large region of its convex inner surface. Substrate protein folds while it is bound to chaperone. Increasing Spy flexibility increases its substrate affinity and overall chaperone activity (shown for 3 different substrates). Protects proteins in vitro against tannin inactivation; tannins have antimicrobial activity. Overexpression enhances the stability of otherwise unstable periplasmic proteins. In Escherichia coli (strain K12), this protein is Periplasmic chaperone Spy.